Reading from the N-terminus, the 482-residue chain is UDP-N-acetylmuramate--L-alanine ligase (482 aa).

129–135 (GTHGKTT) serves as a coordination point for ATP.

Belongs to the MurCDEF family.

The protein localises to the cytoplasm. The catalysed reaction is UDP-N-acetyl-alpha-D-muramate + L-alanine + ATP = UDP-N-acetyl-alpha-D-muramoyl-L-alanine + ADP + phosphate + H(+). Its pathway is cell wall biogenesis; peptidoglycan biosynthesis. Its function is as follows. Cell wall formation. The polypeptide is UDP-N-acetylmuramate--L-alanine ligase (Acinetobacter baumannii (strain SDF)).